The following is a 451-amino-acid chain: Phenylalanine--tRNA ligase, mitochondrial (451 aa).

Substrate is bound by residues 157 to 160 (SAHQ), Arg179, 186 to 188 (QHY), and 193 to 195 (QLE). At Lys202 the chain carries N6-acetyllysine. 2 residues coordinate substrate: Glu287 and Phe312. Residues 358–450 (SKYPAVINDI…AVQLLGVEGR (93 aa)) form the FDX-ACB domain.

It belongs to the class-II aminoacyl-tRNA synthetase family. In terms of assembly, monomer.

Its subcellular location is the mitochondrion matrix. The protein localises to the mitochondrion. It carries out the reaction tRNA(Phe) + L-phenylalanine + ATP = L-phenylalanyl-tRNA(Phe) + AMP + diphosphate + H(+). Is responsible for the charging of tRNA(Phe) with phenylalanine in mitochondrial translation. To a lesser extent, also catalyzes direct attachment of m-Tyr (an oxidized version of Phe) to tRNA(Phe), thereby opening the way for delivery of the misacylated tRNA to the ribosome and incorporation of ROS-damaged amino acid into proteins. The protein is Phenylalanine--tRNA ligase, mitochondrial (FARS2) of Homo sapiens (Human).